We begin with the raw amino-acid sequence, 826 residues long: Sister chromatid cohesion protein PDS5 homolog D (826 aa).

HEAT repeat units lie at residues 18–54 (GTNL…LSMQ), 55–94 (SALI…ITAP), 151–188 (DLIL…DETE), 189–226 (QVST…RCAR), and 230–267 (PYII…HSPV). 2 disordered regions span residues 261 to 551 (PKVH…EVES) and 640 to 826 (KKSK…KRKS). Basic and acidic residues-rich tracts occupy residues 269–286 (TKEH…KENL) and 296–309 (RHET…EKVR). The short motif at 281–288 (SRKENLSK) is the Nuclear localization signal 1 element. Positions 311 to 323 (GNKSSLLKQSLKQ) are enriched in polar residues. The Nuclear localization signal 2 motif lies at 357-364 (GKRDPLKT). The segment covering 396-408 (SPATSSRSLTGSL) has biased composition (polar residues). Residues 424–461 (SLSSPRLKKLASCFRDEEPNQEDDRKIGNSSKQTRSKN) form an HEAT 6 repeat. The segment covering 437-450 (FRDEEPNQEDDRKI) has biased composition (basic and acidic residues). A compositionally biased stretch (polar residues) spans 451–460 (GNSSKQTRSK). Over residues 644-663 (NVAVSVEPTSSSGVRSSSRT) the composition is skewed to low complexity. The span at 665-701 (MKKDCGKRLNKQVEKTREGKNLRSLKELNAETDRTAE) shows a compositional bias: basic and acidic residues. A compositionally biased stretch (acidic residues) spans 702-724 (EQEVSLEAESDDRSEEQEYEDDC). Residues 725 to 746 (SDKKEQSQDKGVEAETKEEEKQ) show a composition bias toward basic and acidic residues. Composition is skewed to acidic residues over residues 752–763 (GESEGEDSESEE), 771–800 (DDME…EVDD), and 811–826 (EKEE…KRKS). A coiled-coil region spans residues 770 to 825 (TDDMEDDEEEEEEEIDHMEDEAEEEKEEVDDKEASANMSEIEKEEEEEEEDEEKRK).

Belongs to the PDS5 family. In terms of assembly, interacts with the cohesin complex.

Its subcellular location is the nucleus. Cohesin cofactor dispensable during the meiotic division but playing an important role in DNA repair by homologous recombination (HR) probably by helping SMC5/SMC6 complex. Regulator of sister chromatid cohesion in mitosis which may stabilize cohesin complex association with chromatin. May couple sister chromatid cohesion during mitosis to DNA replication. Cohesion ensures that chromosome partitioning is accurate in both meiotic and mitotic cells and plays an important role in DNA repair. The chain is Sister chromatid cohesion protein PDS5 homolog D from Arabidopsis thaliana (Mouse-ear cress).